Reading from the N-terminus, the 300-residue chain is Tyrosine recombinase XerC (300 aa).

The region spanning 1 to 86 (MESVLDAFDQ…AVKTFTAWAV (86 aa)) is the Core-binding (CB) domain. The Tyr recombinase domain maps to 107 to 294 (TLPAVLRQDQ…TVARLRAVHD (188 aa)). Catalysis depends on residues arginine 151, lysine 175, histidine 246, arginine 249, and histidine 272. The active-site O-(3'-phospho-DNA)-tyrosine intermediate is tyrosine 281.

This sequence belongs to the 'phage' integrase family. XerC subfamily. As to quaternary structure, forms a cyclic heterotetrameric complex composed of two molecules of XerC and two molecules of XerD.

The protein localises to the cytoplasm. Its function is as follows. Site-specific tyrosine recombinase, which acts by catalyzing the cutting and rejoining of the recombining DNA molecules. The XerC-XerD complex is essential to convert dimers of the bacterial chromosome into monomers to permit their segregation at cell division. It also contributes to the segregational stability of plasmids. The protein is Tyrosine recombinase XerC of Mycobacterium sp. (strain KMS).